Reading from the N-terminus, the 368-residue chain is WD repeat-containing protein wdr-5.1 (368 aa).

A disordered region spans residues 1-64 (MDPAQNQPNT…APTTSQESTI (64 aa)). The segment covering 16-42 (PAVEEAQGVNNSEAEAPAPAALSSVSP) has biased composition (low complexity). 7 WD repeats span residues 77–116 (GHTK…CERT), 119–158 (GHKL…MAKT), 161–200 (GHTN…CVKT), 203–242 (AHSD…CVKT), 246–285 (DENP…TLKQ), 288–330 (GHEN…VVQS), and 333–368 (GHTQ…RSDS).

The protein is WD repeat-containing protein wdr-5.1 of Caenorhabditis briggsae.